Here is a 193-residue protein sequence, read N- to C-terminus: 3-isopropylmalate dehydratase small subunit (193 aa).

This sequence belongs to the LeuD family. LeuD type 1 subfamily. As to quaternary structure, heterodimer of LeuC and LeuD.

The enzyme catalyses (2R,3S)-3-isopropylmalate = (2S)-2-isopropylmalate. It participates in amino-acid biosynthesis; L-leucine biosynthesis; L-leucine from 3-methyl-2-oxobutanoate: step 2/4. Catalyzes the isomerization between 2-isopropylmalate and 3-isopropylmalate, via the formation of 2-isopropylmaleate. The sequence is that of 3-isopropylmalate dehydratase small subunit from Listeria monocytogenes serovar 1/2a (strain ATCC BAA-679 / EGD-e).